Reading from the N-terminus, the 100-residue chain is Integration host factor subunit beta (100 aa).

This sequence belongs to the bacterial histone-like protein family. In terms of assembly, heterodimer of an alpha and a beta chain.

This protein is one of the two subunits of integration host factor, a specific DNA-binding protein that functions in genetic recombination as well as in transcriptional and translational control. The protein is Integration host factor subunit beta of Rhodospirillum rubrum (strain ATCC 11170 / ATH 1.1.1 / DSM 467 / LMG 4362 / NCIMB 8255 / S1).